The sequence spans 335 residues: UPF0353 protein NFA_34780 (335 aa).

A run of 2 helical transmembrane segments spans residues Ala8–Val28 and Ile61–Val81. The VWFA domain maps to Thr90–Leu295. A helical membrane pass occupies residues Arg310 to Tyr330.

The protein belongs to the UPF0353 family.

Its subcellular location is the cell membrane. This chain is UPF0353 protein NFA_34780, found in Nocardia farcinica (strain IFM 10152).